A 227-amino-acid polypeptide reads, in one-letter code: Enolase-phosphatase E1 (227 aa).

This sequence belongs to the HAD-like hydrolase superfamily. MasA/MtnC family. In terms of assembly, monomer. Requires Mg(2+) as cofactor.

It catalyses the reaction 5-methylsulfanyl-2,3-dioxopentyl phosphate + H2O = 1,2-dihydroxy-5-(methylsulfanyl)pent-1-en-3-one + phosphate. It participates in amino-acid biosynthesis; L-methionine biosynthesis via salvage pathway; L-methionine from S-methyl-5-thio-alpha-D-ribose 1-phosphate: step 3/6. Its pathway is amino-acid biosynthesis; L-methionine biosynthesis via salvage pathway; L-methionine from S-methyl-5-thio-alpha-D-ribose 1-phosphate: step 4/6. Bifunctional enzyme that catalyzes the enolization of 2,3-diketo-5-methylthiopentyl-1-phosphate (DK-MTP-1-P) into the intermediate 2-hydroxy-3-keto-5-methylthiopentenyl-1-phosphate (HK-MTPenyl-1-P), which is then dephosphorylated to form the acireductone 1,2-dihydroxy-3-keto-5-methylthiopentene (DHK-MTPene). This is Enolase-phosphatase E1 from Pseudomonas fluorescens (strain Pf0-1).